The chain runs to 297 residues: uncharacterized protein (297 aa).

This is an uncharacterized protein from Frog virus 3 (isolate Goorha) (FV-3).